Here is a 425-residue protein sequence, read N- to C-terminus: MKPQQPQPPLLLLLLLPLLLTTVSSYPLNPKQLKALQSLNISTPTNDPCNNNNNQSSSSSITCDDASPYRHITSISFTNCSSTLSLPSKTLKPLSKSLISLSFTNCPSLSPPYHLPISLHSFSAVSSFLQNNRTKLSGLFLARLKNLKTLYISSTPIQTSRRLYVILGNMHKLTSLTISNSNLTGLIPKSFHSNLRYIDLSNNSLKGSIRISITRLKNLKSLNLSHNSLSGQIPNKIKSLTFLKNLSLASNKLSGTIPNSLSSISELTHLDLSMNQLNGTVPSFFSEMKNLKHLNLADNSFHGVLPFNESFIKNLNFFEIGRNSELCYNKTVLSSNLKLEGLAPCDKYGFPLWSPSQKEESLSGENDYDVEGGNEEKTENLKTKEEEEEEHKGSNKTLFGLGIGLFSLVFLILFLFYLAKRCRLI.

Residues 1 to 25 (MKPQQPQPPLLLLLLLPLLLTTVSS) form the signal peptide. Residues 26 to 397 (YPLNPKQLKA…EEEHKGSNKT (372 aa)) lie on the Extracellular side of the membrane. N-linked (GlcNAc...) asparagine glycans are attached at residues N40, N54, N79, and N132. LRR repeat units lie at residues 144 to 169 (LKNL…ILGN), 170 to 193 (MHKL…SFHS), 195 to 216 (LRYI…ITRL), 217 to 240 (KNLK…IKSL), 242 to 264 (FLKN…LSSI), 265 to 287 (SELT…FFSE), and 288 to 313 (MKNL…SFIK). 7 N-linked (GlcNAc...) asparagine glycosylation sites follow: N182, N202, N223, N245, N278, N308, and N329. The tract at residues 355 to 389 (PSQKEESLSGENDYDVEGGNEEKTENLKTKEEEEE) is disordered. Basic and acidic residues predominate over residues 374 to 389 (NEEKTENLKTKEEEEE). An N-linked (GlcNAc...) asparagine glycan is attached at N395. A helical transmembrane segment spans residues 398–418 (LFGLGIGLFSLVFLILFLFYL). At 419–425 (AKRCRLI) the chain is on the cytoplasmic side.

Belongs to the RLP family.

The protein localises to the cell membrane. Involved in plant defense. The polypeptide is Receptor-like protein 55 (Arabidopsis thaliana (Mouse-ear cress)).